Consider the following 882-residue polypeptide: Translation initiation factor IF-2 (882 aa).

Residues 38–294 (IEDSQASWVK…KSKHKRKKEN (257 aa)) form a disordered region. Basic and acidic residues-rich tracts occupy residues 66–76 (TRDEAVKKHSG), 109–128 (GRREFSENREQSRKGEERHS), and 207–219 (PDNKGSRPSDAKR). Positions 282 to 292 (PGRKSKHKRKK) are enriched in basic residues. A tr-type G domain is found at 383–556 (ARPPVVTIMG…EMNEIRANPD (174 aa)). The G1 stretch occupies residues 392–399 (GHVDHGKT). Position 392–399 (392–399 (GHVDHGKT)) interacts with GTP. Residues 417–421 (GITQH) are G2. The segment at 438–441 (DTPG) is G3. GTP-binding positions include 438-442 (DTPGH) and 492-495 (NKID). Positions 492–495 (NKID) are G4. The interval 528–530 (SAK) is G5.

This sequence belongs to the TRAFAC class translation factor GTPase superfamily. Classic translation factor GTPase family. IF-2 subfamily.

It is found in the cytoplasm. In terms of biological role, one of the essential components for the initiation of protein synthesis. Protects formylmethionyl-tRNA from spontaneous hydrolysis and promotes its binding to the 30S ribosomal subunits. Also involved in the hydrolysis of GTP during the formation of the 70S ribosomal complex. This is Translation initiation factor IF-2 from Syntrophomonas wolfei subsp. wolfei (strain DSM 2245B / Goettingen).